Here is a 47-residue protein sequence, read N- to C-terminus: Defensin-like protein 1 (47 aa).

Disulfide bonds link C5–C47, C16–C36, C22–C43, and C26–C45.

It belongs to the DEFL family.

Its function is as follows. Fabatins have antibacterial activity against Gram-positive and Gram-negative bacteria. High activity against P.aeruginosa. No activity against S.cerevisiae and C.albicans. In Vicia faba (Broad bean), this protein is Defensin-like protein 1.